The following is a 223-amino-acid chain: Deoxyribose-phosphate aldolase 2 (223 aa).

Asp-89 serves as the catalytic Proton donor/acceptor. The active-site Schiff-base intermediate with acetaldehyde is the Lys-152. The active-site Proton donor/acceptor is the Lys-181.

The protein belongs to the DeoC/FbaB aldolase family. DeoC type 1 subfamily.

It is found in the cytoplasm. The catalysed reaction is 2-deoxy-D-ribose 5-phosphate = D-glyceraldehyde 3-phosphate + acetaldehyde. It functions in the pathway carbohydrate degradation; 2-deoxy-D-ribose 1-phosphate degradation; D-glyceraldehyde 3-phosphate and acetaldehyde from 2-deoxy-alpha-D-ribose 1-phosphate: step 2/2. Functionally, catalyzes a reversible aldol reaction between acetaldehyde and D-glyceraldehyde 3-phosphate to generate 2-deoxy-D-ribose 5-phosphate. This Bacillus licheniformis (strain ATCC 14580 / DSM 13 / JCM 2505 / CCUG 7422 / NBRC 12200 / NCIMB 9375 / NCTC 10341 / NRRL NRS-1264 / Gibson 46) protein is Deoxyribose-phosphate aldolase 2.